Reading from the N-terminus, the 478-residue chain is Cytochrome P450 monooxygenase asqL (478 aa).

Cys-407 serves as a coordination point for heme.

The protein belongs to the cytochrome P450 family. The cofactor is heme.

Its pathway is secondary metabolite biosynthesis. The protein operates within alkaloid biosynthesis. It functions in the pathway mycotoxin biosynthesis. In terms of biological role, cytochrome P450 monooxygenase; part of the gene cluster that mediates the biosynthesis of the aspoquinolone mycotoxins. The role of asqL within the aspoquinolone pathway has still to be determined. The first step of the pathway is catalyzed by the nonribosomal peptide synthetase asqK that condenses anthranilic acid and O-methyl-L-tyrosine to produce 4'-methoxycyclopeptin. 4'-methoxycyclopeptin is then converted to 4'-methoxydehydrocyclopeptin by the ketoglutarate-dependent dioxygenase asqJ. AsqJ also converts its first product 4'-methoxydehydrocyclopeptin to 4'-methoxycyclopenin. The following conversion of 4'-methoxycyclopenin into 4'-methoxyviridicatin is catalyzed by the cyclopenase asqI. 4'-methoxyviridicatin is the precursor of quinolone natural products, and is further converted to quinolinone B. The prenyltransferase asqH1 then catalyzes the canonical Friedel-Crafts alkylation of quinolinone B with dimethylallyl cation to yield dimethylallyl quinolone, which is subjected to FAD-dependent dehydrogenation by the FAD-linked oxidoreductase asqF to yield conjugated aryl diene. The delta(3') double bond then serves as the site of the second alkylation with DMAPP catalyzed by the prenyltransferase asqH2 to yield a carbenium ion intermediate, which can be attacked by H(2)O to yield a styrenyl quinolone containing a C3'-hydroxyprenyl chain. The FAD-dependent monooxygenase asqG performs epoxidation of the terminal C7'-C8' olefin. Finally, after dehydratation of the epoxide at C3 by asqC, the quinolone epoxide rearrangement protein asqO catalyzes an enzymatic 3-exo-tet cyclization to yield the cyclopropyl-THF ring system in aspoquinolone. The polypeptide is Cytochrome P450 monooxygenase asqL (Emericella nidulans (strain FGSC A4 / ATCC 38163 / CBS 112.46 / NRRL 194 / M139) (Aspergillus nidulans)).